A 287-amino-acid polypeptide reads, in one-letter code: Nucleotide-binding protein Ppro_0977 (287 aa).

8 to 15 lines the ATP pocket; that stretch reads GMSGSGKS. 59-62 is a GTP binding site; sequence DIRG.

It belongs to the RapZ-like family.

Functionally, displays ATPase and GTPase activities. The chain is Nucleotide-binding protein Ppro_0977 from Pelobacter propionicus (strain DSM 2379 / NBRC 103807 / OttBd1).